Here is a 257-residue protein sequence, read N- to C-terminus: Undecaprenyl-diphosphatase (257 aa).

The next 8 membrane-spanning stretches (helical) occupy residues 4–24 (LFKA…PISS), 51–71 (HVGT…NIFF), 78–98 (LFII…HDLI), 106–126 (LIIV…EKVG), 133–153 (ITLS…IPGV), 171–191 (AYAA…AAML), 207–227 (LFII…KFLL), and 235–255 (LNLF…LYFF).

The protein belongs to the UppP family.

It localises to the cell inner membrane. The catalysed reaction is di-trans,octa-cis-undecaprenyl diphosphate + H2O = di-trans,octa-cis-undecaprenyl phosphate + phosphate + H(+). Its function is as follows. Catalyzes the dephosphorylation of undecaprenyl diphosphate (UPP). Confers resistance to bacitracin. The chain is Undecaprenyl-diphosphatase from Thermodesulfovibrio yellowstonii (strain ATCC 51303 / DSM 11347 / YP87).